We begin with the raw amino-acid sequence, 450 residues long: Ribulose bisphosphate carboxylase large chain (450 aa).

Lys4 carries the post-translational modification N6,N6,N6-trimethyllysine. Substrate is bound by residues Asn113 and Thr163. The active-site Proton acceptor is Lys165. Lys167 is a substrate binding site. Positions 191, 193, and 194 each coordinate Mg(2+). Lys191 is modified (N6-carboxylysine). The active-site Proton acceptor is the His284. Substrate-binding residues include Arg285, His317, and Ser369.

It belongs to the RuBisCO large chain family. Type I subfamily. As to quaternary structure, heterohexadecamer of 8 large chains and 8 small chains; disulfide-linked. The disulfide link is formed within the large subunit homodimers. It depends on Mg(2+) as a cofactor. In terms of processing, the disulfide bond which can form in the large chain dimeric partners within the hexadecamer appears to be associated with oxidative stress and protein turnover.

The protein resides in the plastid. It localises to the chloroplast. The enzyme catalyses 2 (2R)-3-phosphoglycerate + 2 H(+) = D-ribulose 1,5-bisphosphate + CO2 + H2O. It catalyses the reaction D-ribulose 1,5-bisphosphate + O2 = 2-phosphoglycolate + (2R)-3-phosphoglycerate + 2 H(+). Functionally, ruBisCO catalyzes two reactions: the carboxylation of D-ribulose 1,5-bisphosphate, the primary event in carbon dioxide fixation, as well as the oxidative fragmentation of the pentose substrate in the photorespiration process. Both reactions occur simultaneously and in competition at the same active site. In Sedum rubrotinctum (Jelly bean plant), this protein is Ribulose bisphosphate carboxylase large chain.